We begin with the raw amino-acid sequence, 957 residues long: Isoleucine--tRNA ligase (957 aa).

A 'HIGH' region motif is present at residues 57–67 (PYANGDIHIGH). Glutamate 594 contributes to the L-isoleucyl-5'-AMP binding site. Residues 635-639 (KMSKS) carry the 'KMSKS' region motif. Residue lysine 638 coordinates ATP. Zn(2+)-binding residues include cysteine 920, cysteine 923, cysteine 940, and cysteine 943.

The protein belongs to the class-I aminoacyl-tRNA synthetase family. IleS type 1 subfamily. In terms of assembly, monomer. The cofactor is Zn(2+).

The protein resides in the cytoplasm. The catalysed reaction is tRNA(Ile) + L-isoleucine + ATP = L-isoleucyl-tRNA(Ile) + AMP + diphosphate. In terms of biological role, catalyzes the attachment of isoleucine to tRNA(Ile). As IleRS can inadvertently accommodate and process structurally similar amino acids such as valine, to avoid such errors it has two additional distinct tRNA(Ile)-dependent editing activities. One activity is designated as 'pretransfer' editing and involves the hydrolysis of activated Val-AMP. The other activity is designated 'posttransfer' editing and involves deacylation of mischarged Val-tRNA(Ile). The sequence is that of Isoleucine--tRNA ligase from Laribacter hongkongensis (strain HLHK9).